We begin with the raw amino-acid sequence, 148 residues long: Large ribosomal subunit protein bL9 (148 aa).

The protein belongs to the bacterial ribosomal protein bL9 family.

Binds to the 23S rRNA. This Sulfurimonas denitrificans (strain ATCC 33889 / DSM 1251) (Thiomicrospira denitrificans (strain ATCC 33889 / DSM 1251)) protein is Large ribosomal subunit protein bL9.